The following is a 156-amino-acid chain: 6,7-dimethyl-8-ribityllumazine synthase (156 aa).

5-amino-6-(D-ribitylamino)uracil-binding positions include Phe-22, 57–59 (AYE), and 81–83 (TVI). (2S)-2-hydroxy-3-oxobutyl phosphate is bound at residue 86-87 (GT). His-89 functions as the Proton donor in the catalytic mechanism. Phe-114 contacts 5-amino-6-(D-ribitylamino)uracil. Arg-128 contacts (2S)-2-hydroxy-3-oxobutyl phosphate.

It belongs to the DMRL synthase family. In terms of assembly, forms an icosahedral capsid composed of 60 subunits, arranged as a dodecamer of pentamers.

The enzyme catalyses (2S)-2-hydroxy-3-oxobutyl phosphate + 5-amino-6-(D-ribitylamino)uracil = 6,7-dimethyl-8-(1-D-ribityl)lumazine + phosphate + 2 H2O + H(+). It participates in cofactor biosynthesis; riboflavin biosynthesis; riboflavin from 2-hydroxy-3-oxobutyl phosphate and 5-amino-6-(D-ribitylamino)uracil: step 1/2. In terms of biological role, catalyzes the formation of 6,7-dimethyl-8-ribityllumazine by condensation of 5-amino-6-(D-ribitylamino)uracil with 3,4-dihydroxy-2-butanone 4-phosphate. This is the penultimate step in the biosynthesis of riboflavin. This Enterobacter sp. (strain 638) protein is 6,7-dimethyl-8-ribityllumazine synthase.